The primary structure comprises 1074 residues: Collagen, type I, alpha 1a (1074 aa).

The segment covering 1–13 (KSPAMPVPGPMGP) has biased composition (pro residues). Positions 1-1010 (KSPAMPVPGP…PQEKAPDPYR (1010 aa)) are disordered. Over residues 14–36 (MGPRSGPQGFPGEAGAAGAMGPR) the composition is skewed to low complexity. Residues 45 to 59 (NGEDGESGKPGRGGE) are compositionally biased toward basic and acidic residues. The span at 129–147 (TGAAGAAGARGNDGAAGAA) shows a compositional bias: low complexity. Residues 149 to 162 (PPGPTGPAGPPGFP) show a composition bias toward pro residues. Over residues 163-181 (GGPGAKGDAGAQGGRGPEG) the composition is skewed to gly residues. 3 stretches are compositionally biased toward low complexity: residues 182–225 (PAGA…AGAP), 234–272 (SGPQ…APGV), and 290–299 (EPGAAGARGA). Gly residues predominate over residues 301–313 (GERGGPGGRGFPG). 3 stretches are compositionally biased toward low complexity: residues 377-392 (VGAR…PGPK), 469-530 (VPGE…QGMP), and 563-578 (RGLT…AGAT). Positions 588-597 (GPVGPGGARG) are enriched in gly residues. Composition is skewed to low complexity over residues 611–647 (AGFA…AGPT) and 661–683 (PKGA…AGRV). Pro residues predominate over residues 685–697 (PPGPSGNPGPPGP). Composition is skewed to low complexity over residues 715 to 742 (PAGR…SEGA) and 803 to 823 (PGLA…SEGS). The span at 847–857 (APGPPGAPGPV) shows a compositional bias: pro residues. The span at 871-890 (PAGPAGSAGPAGPRGPAGAP) shows a compositional bias: low complexity. The span at 893 to 907 (RGDKGESGEAGERGH) shows a compositional bias: basic and acidic residues. Positions 920-956 (SGSSGEQGPAGAAGPAGPRGPAGSAGSPGKDGMSGLP) are enriched in low complexity. Residues 974–986 (AGPPGPPGPPGAP) are compositionally biased toward pro residues. The Fibrillar collagen NC1 domain occupies 1014–1074 (LEVDSTLKSL…GLEVGPVCFL (61 aa)).

It belongs to the fibrillar collagen family.

The protein resides in the secreted. It is found in the extracellular space. The protein localises to the extracellular matrix. The chain is Collagen, type I, alpha 1a from Epinephelus marginatus (Dusky grouper).